The sequence spans 420 residues: MRCMEEYLFDRSKLAARPLGKVLAEDYCFDLEREEASGFRVSKGFLWCGECRAMEVDEKTVYLHGSKLFMVSDSLKVYELPSALPSSGLVVRGDDCVYIEKNGRRWTFPDMPEDEVLDGTFLGDRVWIWHAVNTEGRRHLSRSTYLLETEKAVRCEGKMYARDGETILQVQDILVRKDAEICNPTRVWSRGAGDGMVVITTTPDTVWMEYGGYVSSKPCCKEIYGMDGCRLLGLSSCVDVSDLYLTLRLFTDIPVEVEAVEKIEEYLFKLFVFTDRGGRLVEWLVESGMDRQKEMILCRLYRKVDDKGKRVLERWMQGIQSLDALKLIIIYFPEKLERYIKMCIEEKREFEIEEVVEHYQGSDKIEEICLVLLKNSCLHLFSLCMPEYKGRFGDVALVERYNMESQRNMWKTQRIHGDLI.

This is an uncharacterized protein from Encephalitozoon cuniculi (strain GB-M1) (Microsporidian parasite).